We begin with the raw amino-acid sequence, 302 residues long: Meiotically up-regulated gene 129 protein (302 aa).

Its function is as follows. Has a role in meiosis. The chain is Meiotically up-regulated gene 129 protein (mug129) from Schizosaccharomyces pombe (strain 972 / ATCC 24843) (Fission yeast).